Consider the following 243-residue polypeptide: Aquaporin SIP1-2 (243 aa).

Transmembrane regions (helical) follow at residues 9 to 29 (AAAADAVVTFLWVLCVSTLGA) and 45 to 65 (FALLVTVSLLSVLLFVFNILC). The NPA 1 signature appears at 74–76 (NPT). 3 helical membrane passes run 98–118 (LPAQAAGAVGGALAISELMPA), 136–156 (GAGAELVLTFVITLAVLLIIV), and 163–183 (IIKTWMISICTLCLVLSGAAY). The NPA 2 signature appears at 189–191 (NPA). The helical transmembrane segment at 211–231 (VYWICPFIGAILAAWIFRAMF) threads the bilayer.

The protein belongs to the MIP/aquaporin (TC 1.A.8) family. SIP (TC 1.A.8.10) subfamily.

The protein localises to the membrane. In terms of biological role, aquaporins facilitate the transport of water and small neutral solutes across cell membranes. The chain is Aquaporin SIP1-2 (SIP1-2) from Zea mays (Maize).